The following is a 386-amino-acid chain: tRNA N6-adenosine threonylcarbamoyltransferase (386 aa).

Residues His141, His145, and Tyr162 each contribute to the a divalent metal cation site. Residues 162-166, Asp194, Gly209, Glu213, and Asn315 contribute to the substrate site; that span reads YVSGG. Residue Asp344 participates in a divalent metal cation binding.

This sequence belongs to the KAE1 / TsaD family. As to quaternary structure, component of the EKC/KEOPS complex composed of at least BUD32, CGI121, GON7, KAE1 and PCC1; the whole complex dimerizes. The cofactor is a divalent metal cation.

It is found in the cytoplasm. It localises to the nucleus. It catalyses the reaction L-threonylcarbamoyladenylate + adenosine(37) in tRNA = N(6)-L-threonylcarbamoyladenosine(37) in tRNA + AMP + H(+). Component of the EKC/KEOPS complex that is required for the formation of a threonylcarbamoyl group on adenosine at position 37 (t(6)A37) in tRNAs that read codons beginning with adenine. The complex is probably involved in the transfer of the threonylcarbamoyl moiety of threonylcarbamoyl-AMP (TC-AMP) to the N6 group of A37. KAE1 likely plays a direct catalytic role in this reaction, but requires other protein(s) of the complex to fulfill this activity. The EKC/KEOPS complex also promotes both telomere uncapping and telomere elongation. The complex is required for efficient recruitment of transcriptional coactivators. The sequence is that of tRNA N6-adenosine threonylcarbamoyltransferase from Saccharomyces cerevisiae (strain ATCC 204508 / S288c) (Baker's yeast).